The following is a 308-amino-acid chain: uncharacterized protein (308 aa).

An N-terminal signal peptide occupies residues 1 to 17; it reads MKSLALLLSLLINFSIG. Asn13, Asn91, Asn159, and Asn210 each carry an N-linked (GlcNAc...) asparagine glycan. The disordered stretch occupies residues 213–308; it reads DEISGGTGAG…HDNYISSFCT (96 aa). Gly residues-rich tracts occupy residues 217 to 231 and 239 to 252; these read GGTG…GSGS and SDGG…GSGS. Over residues 267–284 the composition is skewed to low complexity; it reads NKNNNKNKNNNNNNNNYN.

It localises to the secreted. This is an uncharacterized protein from Dictyostelium discoideum (Social amoeba).